We begin with the raw amino-acid sequence, 864 residues long: Alanine--tRNA ligase (864 aa).

Positions 534, 538, 639, and 643 each coordinate Zn(2+).

The protein belongs to the class-II aminoacyl-tRNA synthetase family. Requires Zn(2+) as cofactor.

The protein resides in the cytoplasm. It catalyses the reaction tRNA(Ala) + L-alanine + ATP = L-alanyl-tRNA(Ala) + AMP + diphosphate. Catalyzes the attachment of alanine to tRNA(Ala) in a two-step reaction: alanine is first activated by ATP to form Ala-AMP and then transferred to the acceptor end of tRNA(Ala). Also edits incorrectly charged Ser-tRNA(Ala) and Gly-tRNA(Ala) via its editing domain. In Onion yellows phytoplasma (strain OY-M), this protein is Alanine--tRNA ligase.